The sequence spans 434 residues: Nicotinate phosphoribosyltransferase (434 aa).

His-242 is subject to Phosphohistidine; by autocatalysis.

The protein belongs to the NAPRTase family. In terms of processing, transiently phosphorylated on a His residue during the reaction cycle. Phosphorylation strongly increases the affinity for substrates and increases the rate of nicotinate D-ribonucleotide production. Dephosphorylation regenerates the low-affinity form of the enzyme, leading to product release.

It catalyses the reaction nicotinate + 5-phospho-alpha-D-ribose 1-diphosphate + ATP + H2O = nicotinate beta-D-ribonucleotide + ADP + phosphate + diphosphate. It participates in cofactor biosynthesis; NAD(+) biosynthesis; nicotinate D-ribonucleotide from nicotinate: step 1/1. Its function is as follows. Catalyzes the synthesis of beta-nicotinate D-ribonucleotide from nicotinate and 5-phospho-D-ribose 1-phosphate at the expense of ATP. This chain is Nicotinate phosphoribosyltransferase, found in Nitrobacter hamburgensis (strain DSM 10229 / NCIMB 13809 / X14).